Consider the following 209-residue polypeptide: Ribosomal RNA small subunit methyltransferase G (209 aa).

Residues Gly71, Phe76, 122–123 (AE), and Arg135 each bind S-adenosyl-L-methionine.

It belongs to the methyltransferase superfamily. RNA methyltransferase RsmG family.

The protein localises to the cytoplasm. In terms of biological role, specifically methylates the N7 position of a guanine in 16S rRNA. The polypeptide is Ribosomal RNA small subunit methyltransferase G (Flavobacterium johnsoniae (strain ATCC 17061 / DSM 2064 / JCM 8514 / BCRC 14874 / CCUG 350202 / NBRC 14942 / NCIMB 11054 / UW101) (Cytophaga johnsonae)).